The sequence spans 345 residues: NADH-quinone oxidoreductase subunit H 1 (345 aa).

9 helical membrane-spanning segments follow: residues 11 to 31, 50 to 70, 84 to 104, 115 to 135, 161 to 181, 187 to 207, 248 to 268, 277 to 297, and 309 to 329; these read IILT…ISLL, PNVV…KYIF, FFLA…VIPF, VAIL…IMGG, LGLI…SHIV, AFGL…LFFI, YIAI…GWLS, VFWM…VKAI, and IGWK…AFLA.

It belongs to the complex I subunit 1 family. As to quaternary structure, NDH-1 is composed of 14 different subunits. Subunits NuoA, H, J, K, L, M, N constitute the membrane sector of the complex.

The protein localises to the cell inner membrane. It catalyses the reaction a quinone + NADH + 5 H(+)(in) = a quinol + NAD(+) + 4 H(+)(out). Its function is as follows. NDH-1 shuttles electrons from NADH, via FMN and iron-sulfur (Fe-S) centers, to quinones in the respiratory chain. The immediate electron acceptor for the enzyme in this species is believed to be ubiquinone. Couples the redox reaction to proton translocation (for every two electrons transferred, four hydrogen ions are translocated across the cytoplasmic membrane), and thus conserves the redox energy in a proton gradient. This subunit may bind ubiquinone. This is NADH-quinone oxidoreductase subunit H 1 from Cereibacter sphaeroides (strain ATCC 17023 / DSM 158 / JCM 6121 / CCUG 31486 / LMG 2827 / NBRC 12203 / NCIMB 8253 / ATH 2.4.1.) (Rhodobacter sphaeroides).